We begin with the raw amino-acid sequence, 226 residues long: Imidazole glycerol phosphate synthase subunit HisH (226 aa).

A Glutamine amidotransferase type-1 domain is found at 6–214 (NIALVDYGVG…VERAASRSAA (209 aa)). Cys-84 acts as the Nucleophile in catalysis. Active-site residues include His-189 and Glu-191.

In terms of assembly, heterodimer of HisH and HisF.

It is found in the cytoplasm. The catalysed reaction is 5-[(5-phospho-1-deoxy-D-ribulos-1-ylimino)methylamino]-1-(5-phospho-beta-D-ribosyl)imidazole-4-carboxamide + L-glutamine = D-erythro-1-(imidazol-4-yl)glycerol 3-phosphate + 5-amino-1-(5-phospho-beta-D-ribosyl)imidazole-4-carboxamide + L-glutamate + H(+). It carries out the reaction L-glutamine + H2O = L-glutamate + NH4(+). Its pathway is amino-acid biosynthesis; L-histidine biosynthesis; L-histidine from 5-phospho-alpha-D-ribose 1-diphosphate: step 5/9. Functionally, IGPS catalyzes the conversion of PRFAR and glutamine to IGP, AICAR and glutamate. The HisH subunit catalyzes the hydrolysis of glutamine to glutamate and ammonia as part of the synthesis of IGP and AICAR. The resulting ammonia molecule is channeled to the active site of HisF. The protein is Imidazole glycerol phosphate synthase subunit HisH of Gloeobacter violaceus (strain ATCC 29082 / PCC 7421).